Consider the following 530-residue polypeptide: Autoinducer-2 kinase (530 aa).

It belongs to the FGGY kinase family.

It localises to the cytoplasm. The enzyme catalyses (S)-4,5-dihydroxypentane-2,3-dione + ATP = (2S)-2-hydroxy-3,4-dioxopentyl phosphate + ADP + H(+). Its function is as follows. Catalyzes the phosphorylation of autoinducer-2 (AI-2) to phospho-AI-2, which subsequently inactivates the transcriptional regulator LsrR and leads to the transcription of the lsr operon. Phosphorylates the ring-open form of (S)-4,5-dihydroxypentane-2,3-dione (DPD), which is the precursor to all AI-2 signaling molecules, at the C5 position. The polypeptide is Autoinducer-2 kinase (Enterobacter sp. (strain 638)).